Here is a 289-residue protein sequence, read N- to C-terminus: Membrane protein insertase YidC (289 aa).

A signal peptide spans 1-19 (MKKKALLPLLLGIMVFLAG). Cys20 is lipidated: N-palmitoyl cysteine. Cys20 is lipidated: S-diacylglycerol cysteine. Helical transmembrane passes span 55–75 (YGLAIIVLVLAIRIIVLPFML), 133–153 (MLGCLPMLIQMPIIMGLFFVL), 177–197 (IWITVIAGVLYFLQAYVSTFS), 210–230 (MIISPIMIIWVSLSSAAALGL), and 231–251 (YWSVSAAFLIVQTYIANAYYS). The interval 268–289 (EHGGSGNSKGAKVVSKKNKKKK) is disordered.

This sequence belongs to the OXA1/ALB3/YidC family. Type 2 subfamily.

It is found in the cell membrane. Functionally, required for the insertion and/or proper folding and/or complex formation of integral membrane proteins into the membrane. Involved in integration of membrane proteins that insert both dependently and independently of the Sec translocase complex, as well as at least some lipoproteins. The sequence is that of Membrane protein insertase YidC from Staphylococcus carnosus (strain TM300).